The following is a 218-amino-acid chain: Glutathione S-transferase Mu 4 (218 aa).

The GST N-terminal domain maps to 2 to 88; that stretch reads SMTLGYWDIR…YIARKHNLCG (87 aa). Glutathione-binding positions include 7-8, 46-50, 59-60, and 72-73; these read YW, WLNEK, NL, and QS. The region spanning 90–208 is the GST C-terminal domain; that stretch reads TEEEKIRVDI…KSSRFLPKPL (119 aa). Y116 lines the substrate pocket.

It belongs to the GST superfamily. Mu family. Homodimer. In terms of tissue distribution, expressed in a wide variety of tissues.

Its subcellular location is the cytoplasm. The catalysed reaction is RX + glutathione = an S-substituted glutathione + a halide anion + H(+). The enzyme catalyses 1-chloro-2,4-dinitrobenzene + glutathione = 2,4-dinitrophenyl-S-glutathione + chloride + H(+). It catalyses the reaction (13S,14S)-epoxy-(4Z,7Z,9E,11E,16Z,19Z)-docosahexaenoate + glutathione = (13R)-S-glutathionyl-(14S)-hydroxy-(4Z,7Z,9E,11E,16Z,19Z)-docosahexaenoate. It carries out the reaction leukotriene C4 = leukotriene A4 + glutathione. In terms of biological role, conjugation of reduced glutathione to a wide number of exogenous and endogenous hydrophobic electrophiles. Catalyzes the conjugation of leukotriene A4 with reduced glutathione (GSH) to form leukotriene C4. Can also catalyze the transfer of a glutathionyl group from glutathione (GSH) to 13(S),14(S)-epoxy-docosahexaenoic acid to form maresin conjugate in tissue regeneration 1 (MCTR1), a bioactive lipid mediator that possess potent anti-inflammatory and proresolving actions. The chain is Glutathione S-transferase Mu 4 (GSTM4) from Homo sapiens (Human).